We begin with the raw amino-acid sequence, 187 residues long: ATP synthase subunit b, chloroplastic (187 aa).

The chain crosses the membrane as a helical span at residues 34-56 (LINLAAVIGLLFYSGRSFLTNLL).

This sequence belongs to the ATPase B chain family. In terms of assembly, F-type ATPases have 2 components, F(1) - the catalytic core - and F(0) - the membrane proton channel. F(1) has five subunits: alpha(3), beta(3), gamma(1), delta(1), epsilon(1). F(0) has four main subunits: a(1), b(1), b'(1) and c(10-14). The alpha and beta chains form an alternating ring which encloses part of the gamma chain. F(1) is attached to F(0) by a central stalk formed by the gamma and epsilon chains, while a peripheral stalk is formed by the delta, b and b' chains.

Its subcellular location is the plastid. It localises to the chloroplast thylakoid membrane. F(1)F(0) ATP synthase produces ATP from ADP in the presence of a proton or sodium gradient. F-type ATPases consist of two structural domains, F(1) containing the extramembraneous catalytic core and F(0) containing the membrane proton channel, linked together by a central stalk and a peripheral stalk. During catalysis, ATP synthesis in the catalytic domain of F(1) is coupled via a rotary mechanism of the central stalk subunits to proton translocation. Functionally, component of the F(0) channel, it forms part of the peripheral stalk, linking F(1) to F(0). The sequence is that of ATP synthase subunit b, chloroplastic from Chlorokybus atmophyticus (Soil alga).